The sequence spans 135 residues: Small ribosomal subunit protein uS9 (135 aa).

The segment at 96-135 is disordered; it reads SADNRKPLKTEGHLSRDPRAKERRKYGLKKARKAPQFSKR. Basic and acidic residues predominate over residues 97–115; the sequence is ADNRKPLKTEGHLSRDPRA. Basic residues predominate over residues 116 to 135; it reads KERRKYGLKKARKAPQFSKR.

This sequence belongs to the universal ribosomal protein uS9 family.

The polypeptide is Small ribosomal subunit protein uS9 (Prochlorococcus marinus (strain MIT 9303)).